Consider the following 413-residue polypeptide: Lipoyl synthase, mitochondrial (413 aa).

The transit peptide at 1–33 (MAAATNRFRALYSSSRVATPQAGSASYLSYRGY) directs the protein to the mitochondrion. [4Fe-4S] cluster-binding residues include cysteine 133, cysteine 138, cysteine 144, cysteine 164, cysteine 168, cysteine 171, and serine 379. The 222-residue stretch at 147 to 368 (GGDKAAATAT…RQRALDMGFL (222 aa)) folds into the Radical SAM core domain.

The protein belongs to the radical SAM superfamily. Lipoyl synthase family. It depends on [4Fe-4S] cluster as a cofactor.

The protein resides in the mitochondrion. The enzyme catalyses [[Fe-S] cluster scaffold protein carrying a second [4Fe-4S](2+) cluster] + N(6)-octanoyl-L-lysyl-[protein] + 2 oxidized [2Fe-2S]-[ferredoxin] + 2 S-adenosyl-L-methionine + 4 H(+) = [[Fe-S] cluster scaffold protein] + N(6)-[(R)-dihydrolipoyl]-L-lysyl-[protein] + 4 Fe(3+) + 2 hydrogen sulfide + 2 5'-deoxyadenosine + 2 L-methionine + 2 reduced [2Fe-2S]-[ferredoxin]. It participates in protein modification; protein lipoylation via endogenous pathway; protein N(6)-(lipoyl)lysine from octanoyl-[acyl-carrier-protein]: step 2/2. Functionally, catalyzes the radical-mediated insertion of two sulfur atoms into the C-6 and C-8 positions of the octanoyl moiety bound to the lipoyl domains of lipoate-dependent enzymes, thereby converting the octanoylated domains into lipoylated derivatives. This Emericella nidulans (strain FGSC A4 / ATCC 38163 / CBS 112.46 / NRRL 194 / M139) (Aspergillus nidulans) protein is Lipoyl synthase, mitochondrial.